The chain runs to 565 residues: Dihydroxy-acid dehydratase (565 aa).

D80 contributes to the Mg(2+) binding site. Residue C121 participates in [2Fe-2S] cluster binding. Residues D122 and K123 each contribute to the Mg(2+) site. Position 123 is an N6-carboxylysine (K123). Position 194 (C194) interacts with [2Fe-2S] cluster. Residue E447 coordinates Mg(2+). S473 acts as the Proton acceptor in catalysis.

This sequence belongs to the IlvD/Edd family. As to quaternary structure, homodimer. [2Fe-2S] cluster serves as cofactor. Requires Mg(2+) as cofactor.

The catalysed reaction is (2R)-2,3-dihydroxy-3-methylbutanoate = 3-methyl-2-oxobutanoate + H2O. It carries out the reaction (2R,3R)-2,3-dihydroxy-3-methylpentanoate = (S)-3-methyl-2-oxopentanoate + H2O. Its pathway is amino-acid biosynthesis; L-isoleucine biosynthesis; L-isoleucine from 2-oxobutanoate: step 3/4. It functions in the pathway amino-acid biosynthesis; L-valine biosynthesis; L-valine from pyruvate: step 3/4. In terms of biological role, functions in the biosynthesis of branched-chain amino acids. Catalyzes the dehydration of (2R,3R)-2,3-dihydroxy-3-methylpentanoate (2,3-dihydroxy-3-methylvalerate) into 2-oxo-3-methylpentanoate (2-oxo-3-methylvalerate) and of (2R)-2,3-dihydroxy-3-methylbutanoate (2,3-dihydroxyisovalerate) into 2-oxo-3-methylbutanoate (2-oxoisovalerate), the penultimate precursor to L-isoleucine and L-valine, respectively. This is Dihydroxy-acid dehydratase from Chlorobium phaeovibrioides (strain DSM 265 / 1930) (Prosthecochloris vibrioformis (strain DSM 265)).